The chain runs to 449 residues: Adenylosuccinate synthetase isozyme 1 A (449 aa).

Residues 1–10 (MSHKSCYTNP) show a composition bias toward polar residues. The tract at residues 1–22 (MSHKSCYTNPGTGGKRPRNDKG) is disordered. Residues 34–40 (GDEGKGK) and 62–64 (GHT) each bind GTP. D35 acts as the Proton acceptor in catalysis. Positions 35 and 62 each coordinate Mg(2+). A substrate-binding site is contributed by D35. Residues 35-38 (DEGK), 60-63 (NAGH), T155, R169, N248, T263, and R327 each bind IMP. The Proton donor role is filled by H63. 323–329 (VTTGRKR) is a binding site for substrate. Residues R329, 355-357 (KLD), and 437-440 (GVGK) contribute to the GTP site.

The protein belongs to the adenylosuccinate synthetase family. In terms of assembly, homodimer. Mg(2+) serves as cofactor.

Its subcellular location is the cytoplasm. The enzyme catalyses IMP + L-aspartate + GTP = N(6)-(1,2-dicarboxyethyl)-AMP + GDP + phosphate + 2 H(+). It functions in the pathway purine metabolism; AMP biosynthesis via de novo pathway; AMP from IMP: step 1/2. Component of the purine nucleotide cycle (PNC), which interconverts IMP and AMP to regulate the nucleotide levels in various tissues, and which contributes to glycolysis and ammoniagenesis. Catalyzes the first committed step in the biosynthesis of AMP from IMP. The polypeptide is Adenylosuccinate synthetase isozyme 1 A (adss1a) (Salmo salar (Atlantic salmon)).